The chain runs to 718 residues: Polyphosphate kinase (718 aa).

Asparagine 47 provides a ligand contact to ATP. Mg(2+) contacts are provided by arginine 372 and arginine 402. Histidine 432 (phosphohistidine intermediate) is an active-site residue. 3 residues coordinate ATP: tyrosine 465, arginine 561, and histidine 589. The disordered stretch occupies residues 683–718; that stretch reads KADHGDTTPTSNAHQFIPMMSPKNEPDASDLDREDD. Residues 709–718 show a composition bias toward acidic residues; it reads DASDLDREDD.

This sequence belongs to the polyphosphate kinase 1 (PPK1) family. Requires Mg(2+) as cofactor. Post-translationally, an intermediate of this reaction is the autophosphorylated ppk in which a phosphate is covalently linked to a histidine residue through a N-P bond.

The catalysed reaction is [phosphate](n) + ATP = [phosphate](n+1) + ADP. In terms of biological role, catalyzes the reversible transfer of the terminal phosphate of ATP to form a long-chain polyphosphate (polyP). The polypeptide is Polyphosphate kinase (Lactiplantibacillus plantarum (strain ATCC BAA-793 / NCIMB 8826 / WCFS1) (Lactobacillus plantarum)).